A 280-amino-acid chain; its full sequence is MCPPQAQAEVGPTMTEKAEMVCAPSPAPAPPPKPASPGPPQVEEVGHRGGSSPPRLPPGVPVISLGHSRPPGVAMPTTELGTLRPPLLQLSTLGTAPPTLALHYHPHPFLNSVYIGPAGPFSIFPSSRLKRRPSHCELDLAEGHQPQKVARRVFTNSRERWRQQNVNGAFAELRKLLPTHPPDRKLSKNEVLRLAMKYIGFLVRLLRDQAAALAAGPTPPGPRKRPVHRVPDDGARRGSGRRAEAAARSQPAPPADPDGSPGGAARPIKMEQTALSPEVR.

Residues 1–60 are disordered; the sequence is MCPPQAQAEVGPTMTEKAEMVCAPSPAPAPPPKPASPGPPQVEEVGHRGGSSPPRLPPGV. Residues 25 to 40 show a composition bias toward pro residues; it reads SPAPAPPPKPASPGPP. In terms of domain architecture, bHLH spans 150–202; the sequence is ARRVFTNSRERWRQQNVNGAFAELRKLLPTHPPDRKLSKNEVLRLAMKYIGFL. The tract at residues 214 to 280 is disordered; it reads AAGPTPPGPR…EQTALSPEVR (67 aa). The segment covering 229–245 has biased composition (basic and acidic residues); sequence RVPDDGARRGSGRRAEA. Positions 257-267 are enriched in low complexity; it reads PDGSPGGAARP. A phosphoserine mark is found at S260 and S276.

Efficient DNA binding requires dimerization with another bHLH protein.

It is found in the nucleus. The protein is Protein lyl-1 (LYL1) of Homo sapiens (Human).